We begin with the raw amino-acid sequence, 166 residues long: ATP synthase subunit b (166 aa).

Residues 15-37 traverse the membrane as a helical segment; that stretch reads TLYYLLIFAALLLLVKHFAWGPV.

It belongs to the ATPase B chain family. In terms of assembly, F-type ATPases have 2 components, F(1) - the catalytic core - and F(0) - the membrane proton channel. F(1) has five subunits: alpha(3), beta(3), gamma(1), delta(1), epsilon(1). F(0) has three main subunits: a(1), b(2) and c(10-14). The alpha and beta chains form an alternating ring which encloses part of the gamma chain. F(1) is attached to F(0) by a central stalk formed by the gamma and epsilon chains, while a peripheral stalk is formed by the delta and b chains.

It localises to the cell membrane. F(1)F(0) ATP synthase produces ATP from ADP in the presence of a proton or sodium gradient. F-type ATPases consist of two structural domains, F(1) containing the extramembraneous catalytic core and F(0) containing the membrane proton channel, linked together by a central stalk and a peripheral stalk. During catalysis, ATP synthesis in the catalytic domain of F(1) is coupled via a rotary mechanism of the central stalk subunits to proton translocation. Its function is as follows. Component of the F(0) channel, it forms part of the peripheral stalk, linking F(1) to F(0). This chain is ATP synthase subunit b, found in Lactobacillus johnsonii (strain CNCM I-12250 / La1 / NCC 533).